A 717-amino-acid polypeptide reads, in one-letter code: Epithelial splicing regulatory protein 2 (717 aa).

Positions 1 to 14 are enriched in pro residues; that stretch reads MTPPPPPPPPPGPD. The segment at 1-23 is disordered; that stretch reads MTPPPPPPPPPGPDPAVDSATDP. Residue Ser-83 is modified to Phosphoserine. RRM domains are found at residues 247 to 343, 348 to 428, and 465 to 545; these read TVVR…RFLS, VILR…RSTA, and DCVR…PCST. A Phosphoserine modification is found at Ser-563.

This sequence belongs to the ESRP family. In terms of assembly, interacts with RBPMS. In terms of tissue distribution, epithelial cell-specific.

The protein resides in the nucleus. Its function is as follows. mRNA splicing factor that regulates the formation of epithelial cell-specific isoforms. Specifically regulates the expression of FGFR2-IIIb, an epithelial cell-specific isoform of FGFR2. Also regulates the splicing of CD44, CTNND1, ENAH, 3 transcripts that undergo changes in splicing during the epithelial-to-mesenchymal transition (EMT). Acts by directly binding specific sequences in mRNAs. Binds the GU-rich sequence motifs in the ISE/ISS-3, a cis-element regulatory region present in the mRNA of FGFR2. This chain is Epithelial splicing regulatory protein 2 (Esrp2), found in Mus musculus (Mouse).